The sequence spans 350 residues: Protein pelota homolog (350 aa).

The protein belongs to the eukaryotic release factor 1 family. Pelota subfamily. Monomer. A divalent metal cation serves as cofactor.

The protein localises to the cytoplasm. In terms of biological role, may function in recognizing stalled ribosomes, interact with stem-loop structures in stalled mRNA molecules, and effect endonucleolytic cleavage of the mRNA. May play a role in the release non-functional ribosomes and degradation of damaged mRNAs. Has endoribonuclease activity. The sequence is that of Protein pelota homolog from Methanosarcina acetivorans (strain ATCC 35395 / DSM 2834 / JCM 12185 / C2A).